Here is a 153-residue protein sequence, read N- to C-terminus: 3-hydroxyacyl-[acyl-carrier-protein] dehydratase FabZ (153 aa).

The active site involves His54.

Belongs to the thioester dehydratase family. FabZ subfamily.

The protein localises to the cytoplasm. The enzyme catalyses a (3R)-hydroxyacyl-[ACP] = a (2E)-enoyl-[ACP] + H2O. Functionally, involved in unsaturated fatty acids biosynthesis. Catalyzes the dehydration of short chain beta-hydroxyacyl-ACPs and long chain saturated and unsaturated beta-hydroxyacyl-ACPs. The polypeptide is 3-hydroxyacyl-[acyl-carrier-protein] dehydratase FabZ (Shewanella denitrificans (strain OS217 / ATCC BAA-1090 / DSM 15013)).